The primary structure comprises 525 residues: MRRRRRRDGFYPAPDFRDREAEDMAGVFDIDLDQPEDAGSEDELEEGGQLNESMDHGGVGPYELGMEHCEKFEISETSVNRGPEKIRPECFELLRVLGKGGYGKVFQVRKVTGANTGKIFAMKVLKKAMIVRNAKDTAHTKAERNILEEVKHPFIVDLIYAFQTGGKLYLILEYLSGGELFMQLEREGIFMEDTACFYLAEISMALGHLHQKGIIYRDLKPENIMLNHQGHVKLTDFGLCKESIHDGTVTHTFCGTIEYMAPEILMRSGHNRAVDWWSLGALMYDMLTGAPPFTGENRKKTIDKILKCKLNLPPYLTQEARDLLKKLLKRNAASRLGAGPGDAGEVQAHPFFRHINWEELLARKVEPPFKPLLQSEEDVSQFDSKFTRQTPVDSPDDSTLSESANQVFLGFTYVAPSVLESVKEKFSFEPKIRSPRRFIGSPRTPVSPVKFSPGDFWGRGASASTANPQTPVEYPMETSGIEQMDVTTSGEASAPLPIRQPNSGPYKKQAFPMISKRPEHLRMNL.

Residues 1–54 (MRRRRRRDGFYPAPDFRDREAEDMAGVFDIDLDQPEDAGSEDELEEGGQLNESM) are disordered. Positions 28-32 (FDIDL) match the TOS motif motif. Acidic residues predominate over residues 30-46 (IDLDQPEDAGSEDELEE). In terms of domain architecture, Protein kinase spans 91–352 (FELLRVLGKG…AGEVQAHPFF (262 aa)). ATP-binding positions include 97–105 (LGKGGYGKV) and lysine 123. Aspartate 218 serves as the catalytic Proton acceptor. The residue at position 252 (threonine 252) is a Phosphothreonine; by PDPK1. One can recognise an AGC-kinase C-terminal domain in the interval 353 to 423 (RHINWEELLA…VAPSVLESVK (71 aa)). The interval 380 to 399 (SQFDSKFTRQTPVDSPDDST) is disordered. A compositionally biased stretch (polar residues) spans 381–399 (QFDSKFTRQTPVDSPDDST). Serine 394 is modified (phosphoserine). Residue threonine 412 is modified to Phosphothreonine; by MTOR, NEK6 and NEK7. The tract at residues 424–525 (EKFSFEPKIR…KRPEHLRMNL (102 aa)) is autoinhibitory domain. Residues serine 434 and serine 441 each carry the phosphoserine modification. Threonine 444 is modified (phosphothreonine). 2 positions are modified to phosphoserine: serine 447 and serine 452. The tract at residues 486-509 (VTTSGEASAPLPIRQPNSGPYKKQ) is disordered. Lysine 516 carries the post-translational modification N6-acetyllysine.

The protein belongs to the protein kinase superfamily. AGC Ser/Thr protein kinase family. S6 kinase subfamily. In terms of assembly, interacts with PPP1R9A/neurabin-1. Interacts with RPTOR. Interacts with IRS1. Interacts with EIF3B and EIF3C. Interacts with TRAF4. Interacts with POLDIP3. Interacts (via N-terminus) with IER5. Phosphorylation at Thr-412 is regulated by mTORC1. The phosphorylation at this site is maintained by an agonist-dependent autophosphorylation mechanism. Activated by phosphorylation at Thr-252 by PDPK1. Dephosphorylation by PPP1CC at Thr-412 in mitochondrion.

It localises to the cytoplasm. The protein resides in the synapse. It is found in the synaptosome. Its subcellular location is the mitochondrion outer membrane. The protein localises to the mitochondrion. The catalysed reaction is L-seryl-[protein] + ATP = O-phospho-L-seryl-[protein] + ADP + H(+). The enzyme catalyses L-threonyl-[protein] + ATP = O-phospho-L-threonyl-[protein] + ADP + H(+). With respect to regulation, activation requires multiple phosphorylation events on serine/threonine residues. Activation appears to be first mediated by phosphorylation of multiple sites in the autoinhibitory domain, which facilitates phosphorylation at Thr-412, disrupting the autoinhibitory mechanism and allowing phosphorylation of Thr-252 by PDPK1. The active conformation of the kinase is believed to be stabilized by a mechanism involving three conserved phosphorylation sites located in the kinase domain activation loop (Thr-252) and in the AGC-kinase C-terminal domain (Ser-394 in the middle of the tail/linker region and Thr-412 within a hydrophobic motif at its end). Activated by mTORC1; isoform Alpha I and isoform Alpha II are sensitive to rapamycin, which inhibits activating phosphorylation at Thr-412. Activated by PDPK1. Serine/threonine-protein kinase that acts downstream of mTOR signaling in response to growth factors and nutrients to promote cell proliferation, cell growth and cell cycle progression. Regulates protein synthesis through phosphorylation of EIF4B, RPS6 and EEF2K, and contributes to cell survival by repressing the pro-apoptotic function of BAD. Under conditions of nutrient depletion, the inactive form associates with the EIF3 translation initiation complex. Upon mitogenic stimulation, phosphorylation by the mechanistic target of rapamycin complex 1 (mTORC1) leads to dissociation from the EIF3 complex and activation. The active form then phosphorylates and activates several substrates in the pre-initiation complex, including the EIF2B complex and the cap-binding complex component EIF4B. Also controls translation initiation by phosphorylating a negative regulator of EIF4A, PDCD4, targeting it for ubiquitination and subsequent proteolysis. Promotes initiation of the pioneer round of protein synthesis by phosphorylating POLDIP3/SKAR. In response to IGF1, activates translation elongation by phosphorylating EEF2 kinase (EEF2K), which leads to its inhibition and thus activation of EEF2. Also plays a role in feedback regulation of mTORC2 by mTORC1 by phosphorylating MAPKAP1/SIN1, MTOR and RICTOR, resulting in the inhibition of mTORC2 and AKT1 signaling. Also involved in feedback regulation of mTORC1 and mTORC2 by phosphorylating DEPTOR. Mediates cell survival by phosphorylating the pro-apoptotic protein BAD and suppressing its pro-apoptotic function. Phosphorylates mitochondrial URI1 leading to dissociation of a URI1-PPP1CC complex. The free mitochondrial PPP1CC can then dephosphorylate RPS6KB1 at Thr-412, which is proposed to be a negative feedback mechanism for the RPS6KB1 anti-apoptotic function. Mediates TNF-alpha-induced insulin resistance by phosphorylating IRS1 at multiple serine residues, resulting in accelerated degradation of IRS1. In cells lacking functional TSC1-2 complex, constitutively phosphorylates and inhibits GSK3B. May be involved in cytoskeletal rearrangement through binding to neurabin. Phosphorylates and activates the pyrimidine biosynthesis enzyme CAD, downstream of MTOR. Following activation by mTORC1, phosphorylates EPRS and thereby plays a key role in fatty acid uptake by adipocytes and also most probably in interferon-gamma-induced translation inhibition. The chain is Ribosomal protein S6 kinase beta-1 (RPS6KB1) from Oryctolagus cuniculus (Rabbit).